Consider the following 100-residue polypeptide: NADH-quinone oxidoreductase subunit K (100 aa).

Transmembrane regions (helical) follow at residues I2 to I22, I29 to I49, and I60 to L80.

This sequence belongs to the complex I subunit 4L family. As to quaternary structure, NDH-1 is composed of 14 different subunits. Subunits NuoA, H, J, K, L, M, N constitute the membrane sector of the complex.

It localises to the cell inner membrane. It catalyses the reaction a quinone + NADH + 5 H(+)(in) = a quinol + NAD(+) + 4 H(+)(out). Functionally, NDH-1 shuttles electrons from NADH, via FMN and iron-sulfur (Fe-S) centers, to quinones in the respiratory chain. The immediate electron acceptor for the enzyme in this species is believed to be ubiquinone. Couples the redox reaction to proton translocation (for every two electrons transferred, four hydrogen ions are translocated across the cytoplasmic membrane), and thus conserves the redox energy in a proton gradient. This Campylobacter concisus (strain 13826) protein is NADH-quinone oxidoreductase subunit K.